Consider the following 442-residue polypeptide: UDP-N-acetylglucosamine 1-carboxyvinyltransferase (442 aa).

22 to 23 (KN) lines the phosphoenolpyruvate pocket. Arginine 94 contacts UDP-N-acetyl-alpha-D-glucosamine. Residue aspartate 119 is the Proton donor of the active site. UDP-N-acetyl-alpha-D-glucosamine contacts are provided by aspartate 309 and valine 331.

This sequence belongs to the EPSP synthase family. MurA subfamily.

Its subcellular location is the cytoplasm. It carries out the reaction phosphoenolpyruvate + UDP-N-acetyl-alpha-D-glucosamine = UDP-N-acetyl-3-O-(1-carboxyvinyl)-alpha-D-glucosamine + phosphate. It participates in cell wall biogenesis; peptidoglycan biosynthesis. Its function is as follows. Cell wall formation. Adds enolpyruvyl to UDP-N-acetylglucosamine. The protein is UDP-N-acetylglucosamine 1-carboxyvinyltransferase of Chlamydia muridarum (strain MoPn / Nigg).